Reading from the N-terminus, the 257-residue chain is Probable 6-phosphogluconolactonase (257 aa).

It belongs to the glucosamine/galactosamine-6-phosphate isomerase family. 6-phosphogluconolactonase subfamily.

The enzyme catalyses 6-phospho-D-glucono-1,5-lactone + H2O = 6-phospho-D-gluconate + H(+). It participates in carbohydrate degradation; pentose phosphate pathway; D-ribulose 5-phosphate from D-glucose 6-phosphate (oxidative stage): step 2/3. Functionally, hydrolysis of 6-phosphogluconolactone to 6-phosphogluconate. This chain is Probable 6-phosphogluconolactonase, found in Schizosaccharomyces pombe (strain 972 / ATCC 24843) (Fission yeast).